The following is a 437-amino-acid chain: GTPase Obg (437 aa).

The 159-residue stretch at 2 to 160 (SMFLDTAKIS…RQLELELKIL (159 aa)) folds into the Obg domain. The 178-residue stretch at 161 to 338 (ADVGLVGFPS…LLEATAELLA (178 aa)) folds into the OBG-type G domain. GTP contacts are provided by residues 167–174 (GFPSVGKS), 192–196 (FTTIV), 214–217 (DLPG), 284–287 (NKMD), and 319–321 (SSL). Positions 174 and 194 each coordinate Mg(2+). Positions 359–437 (GFAEAEKEFE…IGKFEFEFVD (79 aa)) constitute an OCT domain.

It belongs to the TRAFAC class OBG-HflX-like GTPase superfamily. OBG GTPase family. As to quaternary structure, monomer. Mg(2+) is required as a cofactor.

It is found in the cytoplasm. Functionally, an essential GTPase which binds GTP, GDP and possibly (p)ppGpp with moderate affinity, with high nucleotide exchange rates and a fairly low GTP hydrolysis rate. Plays a role in control of the cell cycle, stress response, ribosome biogenesis and in those bacteria that undergo differentiation, in morphogenesis control. This Streptococcus pyogenes serotype M28 (strain MGAS6180) protein is GTPase Obg.